Consider the following 281-residue polypeptide: Biotin synthase (281 aa).

Residues 1–230 (MNQKIFLCSI…AQRIMVAGGR (230 aa)) form the Radical SAM core domain. Residues C18, C22, and C25 each contribute to the [4Fe-4S] cluster site. C62, C97, and R223 together coordinate [2Fe-2S] cluster.

The protein belongs to the radical SAM superfamily. Biotin synthase family. Homodimer. [4Fe-4S] cluster is required as a cofactor. It depends on [2Fe-2S] cluster as a cofactor.

It catalyses the reaction (4R,5S)-dethiobiotin + (sulfur carrier)-SH + 2 reduced [2Fe-2S]-[ferredoxin] + 2 S-adenosyl-L-methionine = (sulfur carrier)-H + biotin + 2 5'-deoxyadenosine + 2 L-methionine + 2 oxidized [2Fe-2S]-[ferredoxin]. It participates in cofactor biosynthesis; biotin biosynthesis; biotin from 7,8-diaminononanoate: step 2/2. In terms of biological role, catalyzes the conversion of dethiobiotin (DTB) to biotin by the insertion of a sulfur atom into dethiobiotin via a radical-based mechanism. The chain is Biotin synthase from Sulfurimonas denitrificans (strain ATCC 33889 / DSM 1251) (Thiomicrospira denitrificans (strain ATCC 33889 / DSM 1251)).